A 570-amino-acid polypeptide reads, in one-letter code: Guanine nucleotide-binding protein alpha-3 subunit (570 aa).

Residues 10 to 113 (RETLRAYLSK…WIEAIKHAIE (104 aa)) enclose the PH domain. The G-alpha domain maps to 144-570 (PVLKLLLLGT…IISKTLEFYC (427 aa)). The G1 motif stretch occupies residues 147–160 (KLLLLGTGESGKST). 152–159 (GTGESGKS) contacts GTP. Residue Ser-159 participates in Mg(2+) binding. Low complexity-rich tracts occupy residues 254-272 (NNNSNSSSLKNNSGGSSSS) and 290-316 (NSNSASPNGPSSSTTTSTINTHNRSNS). The tract at residues 254–321 (NNNSNSSSLK…NRSNSDGSSN (68 aa)) is disordered. Residues 386–394 (DILKSRATT) are G2 motif. Residues 388-394 (LKSRATT), 414-418 (DVAGQ), 483-486 (NKID), and Ala-544 contribute to the GTP site. Thr-394 is a binding site for Mg(2+). The segment at 410 to 419 (FRIVDVAGQR) is G3 motif. Positions 479–486 (ILFLNKID) are G4 motif. The G5 motif stretch occupies residues 542–547 (TCATDT).

Belongs to the G-alpha family. As to quaternary structure, g proteins are composed of 3 units; alpha, beta and gamma. The alpha chain contains the guanine nucleotide binding site.

Its function is as follows. Guanine nucleotide-binding proteins (G proteins) are involved as modulators or transducers in various transmembrane signaling systems. G alpha-3 plays a role in development. G alpha-3 mutants fail to aggregate. The chain is Guanine nucleotide-binding protein alpha-3 subunit (gpaC) from Dictyostelium discoideum (Social amoeba).